The sequence spans 307 residues: Oxygen-dependent coproporphyrinogen-III oxidase (307 aa).

Ser-99 lines the substrate pocket. 2 residues coordinate a divalent metal cation: His-103 and His-113. Residue His-113 is the Proton donor of the active site. 115 to 117 provides a ligand contact to substrate; that stretch reads NVR. Positions 152 and 182 each coordinate a divalent metal cation. The tract at residues 247 to 282 is important for dimerization; the sequence is YVEFNLVFDRGTLFGLQSGGRTESILMSMPPVANWR. A substrate-binding site is contributed by 265 to 267; it reads GGR.

It belongs to the aerobic coproporphyrinogen-III oxidase family. As to quaternary structure, homodimer. A divalent metal cation is required as a cofactor.

Its subcellular location is the cytoplasm. It catalyses the reaction coproporphyrinogen III + O2 + 2 H(+) = protoporphyrinogen IX + 2 CO2 + 2 H2O. It functions in the pathway porphyrin-containing compound metabolism; protoporphyrin-IX biosynthesis; protoporphyrinogen-IX from coproporphyrinogen-III (O2 route): step 1/1. Functionally, involved in the heme biosynthesis. Catalyzes the aerobic oxidative decarboxylation of propionate groups of rings A and B of coproporphyrinogen-III to yield the vinyl groups in protoporphyrinogen-IX. This chain is Oxygen-dependent coproporphyrinogen-III oxidase, found in Burkholderia multivorans (strain ATCC 17616 / 249).